We begin with the raw amino-acid sequence, 424 residues long: Catabolic NAD-specific glutamate dehydrogenase RocG (424 aa).

Substrate is bound by residues Lys80 and Lys104. Lys116 acts as the Proton donor in catalysis. NAD(+) contacts are provided by Thr200 and Asn231. A substrate-binding site is contributed by Ser358.

The protein belongs to the Glu/Leu/Phe/Val dehydrogenases family. In terms of assembly, homohexamer. Interacts with transcriptional regulator GltC.

The catalysed reaction is L-glutamate + NAD(+) + H2O = 2-oxoglutarate + NH4(+) + NADH + H(+). Functionally, devoted to catabolic function of glutamate (and other amino acids of the glutamate family) utilization as sole nitrogen source. It is not involved in anabolic function of glutamate biosynthesis since B.subtilis possesses only one route of glutamate biosynthesis from ammonia, catalyzed by glutamate synthase. Wild-type cells are unable to utilize glutamate or glutamine as a sole carbon source; thus RocG does not function physiologically to synthesize glutamate, but it is involved in the utilization of arginine, and proline as carbon or nitrogen source. The catabolic RocG is essential for controlling gltAB expression via an inhibitory interactions with the transcriptional regulator GltC in response to the availability of sugars. The chain is Catabolic NAD-specific glutamate dehydrogenase RocG from Bacillus subtilis (strain 168).